Here is a 74-residue protein sequence, read N- to C-terminus: Large ribosomal subunit protein uL30 (74 aa).

The protein belongs to the universal ribosomal protein uL30 family. In terms of assembly, part of the 50S ribosomal subunit.

The sequence is that of Large ribosomal subunit protein uL30 from Koribacter versatilis (strain Ellin345).